Consider the following 304-residue polypeptide: MKHLTTMSELSTEEIKDLLQTAQELKSGKTDNQLTGKFAANLFFEPSTRTRFSFEVAEKKLGMNVLNLDGTSTSVQKGETLYDTIRTLESIGVDVCVIRHSEDEYYEELVSQVNIPILNAGDGCGQHPTQSLLDLMTIYEEFNTFKGLTVSIHGDIKHSRVARSNAEVLTRLGARVLFSGPSEWQDEENTFGTYVSMDEAVESSDVVMLLRIQNERHQSAVSQEGYLNKYGLTVERAERMKRHAIIMHPAPVNRGVEIDDSLVESEKSRIFKQMKNGVFIRMAVIQRALQTNVKRGEAAYVISH.

Residues arginine 49 and threonine 50 each contribute to the carbamoyl phosphate site. Lysine 77 is a binding site for L-aspartate. Residues arginine 99, histidine 127, and glutamine 130 each coordinate carbamoyl phosphate. The L-aspartate site is built by arginine 160 and arginine 211. 2 residues coordinate carbamoyl phosphate: alanine 250 and proline 251. Phosphoserine is present on serine 303.

This sequence belongs to the aspartate/ornithine carbamoyltransferase superfamily. ATCase family. In terms of assembly, heterododecamer (2C3:3R2) of six catalytic PyrB chains organized as two trimers (C3), and six regulatory PyrI chains organized as three dimers (R2).

It catalyses the reaction carbamoyl phosphate + L-aspartate = N-carbamoyl-L-aspartate + phosphate + H(+). It functions in the pathway pyrimidine metabolism; UMP biosynthesis via de novo pathway; (S)-dihydroorotate from bicarbonate: step 2/3. Its function is as follows. Catalyzes the condensation of carbamoyl phosphate and aspartate to form carbamoyl aspartate and inorganic phosphate, the committed step in the de novo pyrimidine nucleotide biosynthesis pathway. The polypeptide is Aspartate carbamoyltransferase catalytic subunit (Bacillus subtilis (strain 168)).